A 260-amino-acid polypeptide reads, in one-letter code: UPF0246 protein APL_0602 (260 aa).

It belongs to the UPF0246 family.

The polypeptide is UPF0246 protein APL_0602 (Actinobacillus pleuropneumoniae serotype 5b (strain L20)).